A 243-amino-acid polypeptide reads, in one-letter code: UDP-2,3-diacylglucosamine hydrolase (243 aa).

Mn(2+)-binding residues include aspartate 9, histidine 11, aspartate 42, asparagine 79, and histidine 114. 79–80 (NR) is a substrate binding site. The substrate site is built by aspartate 122, serine 160, asparagine 164, and histidine 195. Mn(2+) contacts are provided by histidine 195 and histidine 197.

This sequence belongs to the LpxH family. Mn(2+) is required as a cofactor.

The protein resides in the cell inner membrane. The enzyme catalyses UDP-2-N,3-O-bis[(3R)-3-hydroxytetradecanoyl]-alpha-D-glucosamine + H2O = 2-N,3-O-bis[(3R)-3-hydroxytetradecanoyl]-alpha-D-glucosaminyl 1-phosphate + UMP + 2 H(+). The protein operates within glycolipid biosynthesis; lipid IV(A) biosynthesis; lipid IV(A) from (3R)-3-hydroxytetradecanoyl-[acyl-carrier-protein] and UDP-N-acetyl-alpha-D-glucosamine: step 4/6. In terms of biological role, hydrolyzes the pyrophosphate bond of UDP-2,3-diacylglucosamine to yield 2,3-diacylglucosamine 1-phosphate (lipid X) and UMP by catalyzing the attack of water at the alpha-P atom. Involved in the biosynthesis of lipid A, a phosphorylated glycolipid that anchors the lipopolysaccharide to the outer membrane of the cell. This is UDP-2,3-diacylglucosamine hydrolase from Coxiella burnetii (strain Dugway 5J108-111).